A 423-amino-acid chain; its full sequence is Glutamate-1-semialdehyde 2,1-aminomutase (423 aa).

The residue at position 266 (K266) is an N6-(pyridoxal phosphate)lysine.

The protein belongs to the class-III pyridoxal-phosphate-dependent aminotransferase family. HemL subfamily. In terms of assembly, homodimer. It depends on pyridoxal 5'-phosphate as a cofactor.

The protein resides in the cytoplasm. The catalysed reaction is (S)-4-amino-5-oxopentanoate = 5-aminolevulinate. It participates in porphyrin-containing compound metabolism; protoporphyrin-IX biosynthesis; 5-aminolevulinate from L-glutamyl-tRNA(Glu): step 2/2. The sequence is that of Glutamate-1-semialdehyde 2,1-aminomutase from Nitratidesulfovibrio vulgaris (strain ATCC 29579 / DSM 644 / CCUG 34227 / NCIMB 8303 / VKM B-1760 / Hildenborough) (Desulfovibrio vulgaris).